Consider the following 134-residue polypeptide: Fatty acid-binding protein, muscle (134 aa).

(9Z)-octadecenoate contacts are provided by residues Arg109 and 129–131 (RIY).

This sequence belongs to the calycin superfamily. Fatty-acid binding protein (FABP) family. In terms of assembly, monomer. Adult flight muscle.

The protein resides in the cytoplasm. Binds fatty acids in a 1:1 molar ratio. This chain is Fatty acid-binding protein, muscle, found in Schistocerca gregaria (Desert locust).